Consider the following 90-residue polypeptide: U7-theraphotoxin-Hhn1a 2 (90 aa).

The N-terminal stretch at 1–19 (MKIAIFTVVLALAVFAVLS) is a signal peptide. The propeptide occupies 20–50 (FGWEANEKALSEEFTELIHEKEAASETEARE). Intrachain disulfides connect cysteine 51/cysteine 65, cysteine 58/cysteine 70, and cysteine 64/cysteine 81.

The protein belongs to the neurotoxin 10 (Hwtx-1) family. 13 (Hntx-13) subfamily. In terms of tissue distribution, expressed by the venom gland.

The protein localises to the secreted. In terms of biological role, ion channel inhibitor. The polypeptide is U7-theraphotoxin-Hhn1a 2 (Cyriopagopus hainanus (Chinese bird spider)).